The sequence spans 220 residues: Glutathione S-transferase (220 aa).

The region spanning 1 to 77 (MLKLHGFSVS…YIEQTQSGKA (77 aa)) is the GST N-terminal domain. Glutathione is bound by residues Tyr-12, Val-49, and 61–62 (ET). Residues 82 to 211 (DPFEQAKVRE…ADKEASMPAF (130 aa)) enclose the GST C-terminal domain.

It belongs to the GST superfamily. In terms of assembly, monomer and homodimer.

It is found in the cytoplasm. It carries out the reaction RX + glutathione = an S-substituted glutathione + a halide anion + H(+). Functionally, conjugation of reduced glutathione to a wide number of exogenous and endogenous hydrophobic electrophiles. The chain is Glutathione S-transferase from Pseudomonas putida (strain ATCC 700007 / DSM 6899 / JCM 31910 / BCRC 17059 / LMG 24140 / F1).